The following is a 397-amino-acid chain: Protein Rep52 (397 aa).

The region spanning 84-239 (DPQYAASVFL…LDHDFGKVTK (156 aa)) is the SF3 helicase domain. Position 110 to 117 (110 to 117 (GPATTGKT)) interacts with ATP. Residues 265 to 296 (GGAKKRPAPSDADISEPKRVRESVAQPSTSDA) are disordered.

Homooligomer. Interacts with host PRKX.

The protein resides in the host nucleus. Plays a critical role during packaging of viral DNA into empty capsids, where they are thought to be part of the packaging motor complex. The single stranded genomic DNA is packaged in a 3' to 5' direction and requires the association between viral DNA and Rep40. Regulates host PKA activity by interacting with host PRKX as a mechanism to interfere with helper virus propagation and to promote its own replication. This Mammalia (AAV-2) protein is Protein Rep52 (Rep52).